Consider the following 295-residue polypeptide: Pyridoxal 5'-phosphate synthase subunit PdxS (295 aa).

Position 25 (Asp25) interacts with D-ribose 5-phosphate. Residue Lys82 is the Schiff-base intermediate with D-ribose 5-phosphate of the active site. Gly154 provides a ligand contact to D-ribose 5-phosphate. Arg166 is a binding site for D-glyceraldehyde 3-phosphate. Residues Gly215 and 236–237 (GS) contribute to the D-ribose 5-phosphate site.

Belongs to the PdxS/SNZ family. As to quaternary structure, in the presence of PdxT, forms a dodecamer of heterodimers.

It catalyses the reaction aldehydo-D-ribose 5-phosphate + D-glyceraldehyde 3-phosphate + L-glutamine = pyridoxal 5'-phosphate + L-glutamate + phosphate + 3 H2O + H(+). It participates in cofactor biosynthesis; pyridoxal 5'-phosphate biosynthesis. In terms of biological role, catalyzes the formation of pyridoxal 5'-phosphate from ribose 5-phosphate (RBP), glyceraldehyde 3-phosphate (G3P) and ammonia. The ammonia is provided by the PdxT subunit. Can also use ribulose 5-phosphate and dihydroxyacetone phosphate as substrates, resulting from enzyme-catalyzed isomerization of RBP and G3P, respectively. The chain is Pyridoxal 5'-phosphate synthase subunit PdxS from Bacillus cereus (strain B4264).